Here is a 213-residue protein sequence, read N- to C-terminus: Large ribosomal subunit protein uL1 (213 aa).

It belongs to the universal ribosomal protein uL1 family. Part of the 50S ribosomal subunit.

Binds directly to 23S rRNA. Probably involved in E site tRNA release. Functionally, protein L1 is also a translational repressor protein, it controls the translation of its operon by binding to its mRNA. The chain is Large ribosomal subunit protein uL1 from Methanoculleus marisnigri (strain ATCC 35101 / DSM 1498 / JR1).